The following is a 1085-amino-acid chain: DNA repair and recombination protein RAD26 (1085 aa).

A Phosphoserine modification is found at S30. Disordered stretches follow at residues K118–E141 and N190–D219. Basic and acidic residues predominate over residues K128–E141. Over residues S210–D219 the composition is skewed to acidic residues. The 210-residue stretch at Y309–G518 folds into the Helicase ATP-binding domain. ATP is bound at residue D322–T329. The short motif at D469–H472 is the DEGH box element. One can recognise a Helicase C-terminal domain in the interval V655 to H818.

Belongs to the SNF2/RAD54 helicase family.

It localises to the nucleus. It catalyses the reaction ATP + H2O = ADP + phosphate + H(+). Functionally, may be involved in the preferential repair of active genes. In Saccharomyces cerevisiae (strain ATCC 204508 / S288c) (Baker's yeast), this protein is DNA repair and recombination protein RAD26 (RAD26).